We begin with the raw amino-acid sequence, 715 residues long: uncharacterized protein (715 aa).

Disordered stretches follow at residues 192-216 (ASSV…SVTA), 300-348 (NEEV…TSKR), 461-481 (ASSS…RSNE), and 580-630 (FTVS…KPPK). Positions 202–213 (NNTSPYPPSNSS) are enriched in low complexity. Composition is skewed to polar residues over residues 301 to 326 (EEVS…NKND) and 472 to 481 (HLGTSLRSNE). Residues 601 to 614 (TDSSPSDTISSSPT) show a composition bias toward low complexity.

This is an uncharacterized protein from Schizosaccharomyces pombe (strain 972 / ATCC 24843) (Fission yeast).